The following is a 283-amino-acid chain: Pantothenate synthetase (283 aa).

ATP is bound at residue 34–41 (MGALHDGH). Residue histidine 41 is the Proton donor of the active site. Residue glutamine 65 coordinates (R)-pantoate. Glutamine 65 is a binding site for beta-alanine. 152–155 (GEKD) contacts ATP. Glutamine 158 provides a ligand contact to (R)-pantoate. ATP contacts are provided by residues valine 181 and 189 to 192 (MSSR).

This sequence belongs to the pantothenate synthetase family. In terms of assembly, homodimer.

Its subcellular location is the cytoplasm. It catalyses the reaction (R)-pantoate + beta-alanine + ATP = (R)-pantothenate + AMP + diphosphate + H(+). It participates in cofactor biosynthesis; (R)-pantothenate biosynthesis; (R)-pantothenate from (R)-pantoate and beta-alanine: step 1/1. In terms of biological role, catalyzes the condensation of pantoate with beta-alanine in an ATP-dependent reaction via a pantoyl-adenylate intermediate. The protein is Pantothenate synthetase of Rhodopseudomonas palustris (strain BisB18).